The primary structure comprises 284 residues: Avenin-like b10 (284 aa).

The first 18 residues, 1-18 (MKVFILALLALAATTAIA), serve as a signal peptide directing secretion.

The protein belongs to the prolamin family. In terms of processing, contains disulfide bonds.

Its function is as follows. Seed storage protein. Might be integrated via inter-chain disulfide bonds within the glutenin polymer. This Triticum aestivum (Wheat) protein is Avenin-like b10.